The sequence spans 140 residues: ATP synthase epsilon chain (140 aa).

Belongs to the ATPase epsilon chain family. As to quaternary structure, F-type ATPases have 2 components, CF(1) - the catalytic core - and CF(0) - the membrane proton channel. CF(1) has five subunits: alpha(3), beta(3), gamma(1), delta(1), epsilon(1). CF(0) has three main subunits: a, b and c.

The protein resides in the cell inner membrane. Functionally, produces ATP from ADP in the presence of a proton gradient across the membrane. The polypeptide is ATP synthase epsilon chain (Sodalis glossinidius (strain morsitans)).